Reading from the N-terminus, the 106-residue chain is Nucleoid-associated protein XAC1110 (106 aa).

Residues 80–89 (KIDAESKDRM) are compositionally biased toward basic and acidic residues. Residues 80 to 106 (KIDAESKDRMGSATAGMQLPPGMKLPF) are disordered.

Belongs to the YbaB/EbfC family. In terms of assembly, homodimer.

Its subcellular location is the cytoplasm. The protein localises to the nucleoid. In terms of biological role, binds to DNA and alters its conformation. May be involved in regulation of gene expression, nucleoid organization and DNA protection. This chain is Nucleoid-associated protein XAC1110, found in Xanthomonas axonopodis pv. citri (strain 306).